Consider the following 459-residue polypeptide: Cysteine--tRNA ligase (459 aa).

Zn(2+) is bound at residue Cys-27. Positions 29–39 match the 'HIGH' region motif; that stretch reads VTVYDDCHIGH. Cys-208, His-233, and Glu-237 together coordinate Zn(2+). A 'KMSKS' region motif is present at residues 265–269; the sequence is KMSKS. Lys-268 contacts ATP.

This sequence belongs to the class-I aminoacyl-tRNA synthetase family. Monomer. Zn(2+) serves as cofactor.

The protein resides in the cytoplasm. It catalyses the reaction tRNA(Cys) + L-cysteine + ATP = L-cysteinyl-tRNA(Cys) + AMP + diphosphate. This chain is Cysteine--tRNA ligase, found in Francisella tularensis subsp. mediasiatica (strain FSC147).